We begin with the raw amino-acid sequence, 356 residues long: uncharacterized protein (356 aa).

The protein belongs to the NAD(P)-dependent epimerase/dehydratase family. NAD(+) is required as a cofactor. NADP(+) serves as cofactor.

In terms of biological role, putative nucleotide sugar epimerase/dehydrogenase. This is an uncharacterized protein from Sinorhizobium fredii (strain NBRC 101917 / NGR234).